The chain runs to 924 residues: LPS-assembly protein LptD (924 aa).

The N-terminal stretch at 1-33 (MAVKSLVFRRKFPLLVTGSLLALQPVAALTVQA) is a signal peptide. The tract at residues 58-102 (NLPPRPAHTATSVSTAAAGSSVSGSGGETVEAEPTQRLVTESGGR) is disordered. Residues 66–90 (TATSVSTAAAGSSVSGSGGETVEAE) are compositionally biased toward low complexity.

The protein belongs to the LptD family. In terms of assembly, component of the lipopolysaccharide transport and assembly complex. Interacts with LptE and LptA.

Its subcellular location is the cell outer membrane. Its function is as follows. Together with LptE, is involved in the assembly of lipopolysaccharide (LPS) at the surface of the outer membrane. This Pseudomonas aeruginosa (strain UCBPP-PA14) protein is LPS-assembly protein LptD.